Here is a 224-residue protein sequence, read N- to C-terminus: 7-cyano-7-deazaguanine synthase (224 aa).

Position 8-18 (8-18 (LSGGMDSAAVI)) interacts with ATP. Zn(2+)-binding residues include Cys186, Cys196, Cys199, and Cys202.

The protein belongs to the QueC family. It depends on Zn(2+) as a cofactor.

It carries out the reaction 7-carboxy-7-deazaguanine + NH4(+) + ATP = 7-cyano-7-deazaguanine + ADP + phosphate + H2O + H(+). It functions in the pathway purine metabolism; 7-cyano-7-deazaguanine biosynthesis. In terms of biological role, catalyzes the ATP-dependent conversion of 7-carboxy-7-deazaguanine (CDG) to 7-cyano-7-deazaguanine (preQ(0)). This is 7-cyano-7-deazaguanine synthase from Xanthomonas oryzae pv. oryzae (strain MAFF 311018).